Consider the following 176-residue polypeptide: Immunity factor for TNT homolog (176 aa).

Interacts with the tuberculosis necrotizing toxin (TNT) homolog, the C-terminal domain of the outer membrane channel protein CpnT.

Functionally, antitoxin for tuberculosis necrotizing toxin (TNT) homolog. Acts by binding directly to TNT, which inhibits NAD(+) glycohydrolase activity of TNT and protects M.bovis from self-poisoning. The polypeptide is Immunity factor for TNT homolog (Mycobacterium bovis (strain BCG / Pasteur 1173P2)).